We begin with the raw amino-acid sequence, 325 residues long: mRNA decay factor CTH1 (325 aa).

C3H1-type zinc fingers lie at residues 204-232 (LYKTELCESFTIKGYCKYGNKCQFAHGLN) and 242-270 (NYRTKPCINWSKLGYCPYGKRCCFKHGDD). The tract at residues 284–306 (SKDTALTPLPTSLAPSNNDNITN) is disordered. Over residues 292 to 306 (LPTSLAPSNNDNITN) the composition is skewed to polar residues.

In terms of biological role, binds to specific AU-rich elements (ARE) in the 3'-untranslated region of target mRNAs and promotes their degradation. In response to iron deficiency, promotes the decay of many mRNAs encoding proteins involved in iron-dependent pathways. Negatively regulates primarily iron-dependent mitochondrial processes including respiration and amino acid biosynthesis. In Saccharomyces cerevisiae (strain ATCC 204508 / S288c) (Baker's yeast), this protein is mRNA decay factor CTH1 (CTH1).